The primary structure comprises 376 residues: Glucose-1-phosphate adenylyltransferase (376 aa).

Alpha-D-glucose 1-phosphate is bound by residues Y101, G166, 181 to 182 (EK), and S192.

This sequence belongs to the bacterial/plant glucose-1-phosphate adenylyltransferase family. Homotetramer.

It carries out the reaction alpha-D-glucose 1-phosphate + ATP + H(+) = ADP-alpha-D-glucose + diphosphate. The protein operates within glycan biosynthesis; glycogen biosynthesis. Its function is as follows. Involved in the biosynthesis of ADP-glucose, a building block required for the elongation reactions to produce glycogen. Catalyzes the reaction between ATP and alpha-D-glucose 1-phosphate (G1P) to produce pyrophosphate and ADP-Glc. This chain is Glucose-1-phosphate adenylyltransferase, found in Bacillus cytotoxicus (strain DSM 22905 / CIP 110041 / 391-98 / NVH 391-98).